We begin with the raw amino-acid sequence, 423 residues long: Guanine nucleotide-binding protein subunit beta (423 aa).

WD repeat units follow at residues 90 to 120 (GHNN…LIWD), 132 to 162 (LDSQ…TIYR), 179 to 208 (GHTC…ALWD), 220 to 256 (DHLG…YIWD), 268 to 298 (VNDS…NMYD), 348 to 377 (DNQG…VVWD), and 389 to 419 (GHGG…KIWS).

It belongs to the WD repeat G protein beta family. As to quaternary structure, g proteins are composed of 3 units, alpha, beta and gamma. The beta-gamma subunit complex (STE4-STE18 complex) interacts with PLP1 and PLP2. Interacts with SYG1.

Implicated in the a- and alpha-factor response pathway. The beta and gamma chains of the putative yeast mating response pathway G protein play a positive role in initiation of the mating response. The beta and gamma chains are required for the GTPase activity, for replacement of GDP by GTP, and for G protein-effector interaction. This Saccharomyces cerevisiae (strain ATCC 204508 / S288c) (Baker's yeast) protein is Guanine nucleotide-binding protein subunit beta (STE4).